We begin with the raw amino-acid sequence, 439 residues long: Xaa-Pro dipeptidase (439 aa).

Positions 244, 255, 335, 380, and 419 each coordinate Mn(2+).

It belongs to the peptidase M24B family. Bacterial-type prolidase subfamily. Requires Mn(2+) as cofactor.

The catalysed reaction is Xaa-L-Pro dipeptide + H2O = an L-alpha-amino acid + L-proline. In terms of biological role, splits dipeptides with a prolyl residue in the C-terminal position. The chain is Xaa-Pro dipeptidase from Shewanella sp. (strain ANA-3).